Consider the following 307-residue polypeptide: OTU domain-containing protein 2 (307 aa).

2 disordered regions span residues Glu23–Val46 and Ser96–Asp130. Residues Gln103–Gln114 are compositionally biased toward low complexity. Residues Leu167–Ser307 enclose the OTU domain.

This chain is OTU domain-containing protein 2 (OTU2), found in Saccharomyces cerevisiae (strain ATCC 204508 / S288c) (Baker's yeast).